The chain runs to 771 residues: Kinase suppressor of Ras A (771 aa).

A compositionally biased stretch (polar residues) spans 152–169 (SRTSSGSTDEPSGQSTPA). Residues 152 to 172 (SRTSSGSTDEPSGQSTPAIVT) are disordered. Residues 215 to 269 (PHKWHRSTKFRFSGDAVCHFCQRPLGFGFLNAWEKCRSCKWKVHTQCKGRVGDSC) form a Phorbol-ester/DAG-type zinc finger. Disordered stretches follow at residues 290–339 (GMWK…ISGN) and 414–433 (DSTG…EAVD). Residues 318 to 331 (SSSSTNSSAPSTPA) show a composition bias toward low complexity. One can recognise a Protein kinase domain in the interval 477-748 (DKQAPIIGRG…TDINLKLTAL (272 aa)). Residues 483–491 (IGRGRFGKV) and K503 contribute to the ATP site. D600 (proton acceptor) is an active-site residue.

This sequence belongs to the protein kinase superfamily. TKL Ser/Thr protein kinase family. Interacts with mek-2. Mg(2+) serves as cofactor.

It carries out the reaction L-seryl-[protein] + ATP = O-phospho-L-seryl-[protein] + ADP + H(+). The catalysed reaction is L-threonyl-[protein] + ATP = O-phospho-L-threonyl-[protein] + ADP + H(+). Functionally, serine/threonine-protein kinase which positively regulates Ras-mediated signaling probably acting at the level of let-60/ras or/and lin-45/raf. Involved in sex myoblast migration. Plays a role in responses to M.nematophilum-mediated bacterial infection by promoting tail swelling and preventing constipation. Functions redundantly with ksr-2 in the Ras-mediated regulation of larval survival, the development of excretory canal and in mpk-1 phosphorylation in somatic cells. In addition, involved in determining vulval precursor cell fate during vulval induction independently of its kinase activity. Plays a role in egg-laying. This Caenorhabditis elegans protein is Kinase suppressor of Ras A.